The primary structure comprises 95 residues: Aspartyl/glutamyl-tRNA(Asn/Gln) amidotransferase subunit C (95 aa).

The protein belongs to the GatC family. In terms of assembly, heterotrimer of A, B and C subunits.

It carries out the reaction L-glutamyl-tRNA(Gln) + L-glutamine + ATP + H2O = L-glutaminyl-tRNA(Gln) + L-glutamate + ADP + phosphate + H(+). It catalyses the reaction L-aspartyl-tRNA(Asn) + L-glutamine + ATP + H2O = L-asparaginyl-tRNA(Asn) + L-glutamate + ADP + phosphate + 2 H(+). Functionally, allows the formation of correctly charged Asn-tRNA(Asn) or Gln-tRNA(Gln) through the transamidation of misacylated Asp-tRNA(Asn) or Glu-tRNA(Gln) in organisms which lack either or both of asparaginyl-tRNA or glutaminyl-tRNA synthetases. The reaction takes place in the presence of glutamine and ATP through an activated phospho-Asp-tRNA(Asn) or phospho-Glu-tRNA(Gln). The sequence is that of Aspartyl/glutamyl-tRNA(Asn/Gln) amidotransferase subunit C from Methylorubrum extorquens (strain CM4 / NCIMB 13688) (Methylobacterium extorquens).